The chain runs to 306 residues: GTPase Era (306 aa).

Positions 14 to 181 constitute an Era-type G domain; the sequence is KSGFIGIIGR…LDELWKYLPE (168 aa). Residues 22–29 form a G1 region; the sequence is GRPNVGKS. Residue 22–29 coordinates GTP; the sequence is GRPNVGKS. The G2 stretch occupies residues 48–52; sequence QTTRN. The tract at residues 69 to 72 is G3; that stretch reads DTPG. Residues 69–73 and 131–134 each bind GTP; these read DTPGI and NKID. The interval 131–134 is G4; that stretch reads NKID. Residues 160–162 form a G5 region; sequence ISA. Residues 212 to 290 enclose the KH type-2 domain; the sequence is THKEIPYSSA…FLELFVRVRK (79 aa).

It belongs to the TRAFAC class TrmE-Era-EngA-EngB-Septin-like GTPase superfamily. Era GTPase family. As to quaternary structure, monomer.

The protein resides in the cytoplasm. It localises to the cell inner membrane. Its function is as follows. An essential GTPase that binds both GDP and GTP, with rapid nucleotide exchange. Plays a role in 16S rRNA processing and 30S ribosomal subunit biogenesis and possibly also in cell cycle regulation and energy metabolism. This chain is GTPase Era, found in Syntrophus aciditrophicus (strain SB).